We begin with the raw amino-acid sequence, 162 residues long: Caveolin-2 (162 aa).

Residues 1–86 (MGLETEKADV…FEISKYVMYK (86 aa)) lie on the Cytoplasmic side of the membrane. Tyrosine 19 carries the phosphotyrosine; by SRC modification. Phosphoserine occurs at positions 20 and 23. Tyrosine 27 is modified (phosphotyrosine; by SRC). Serine 36 carries the post-translational modification Phosphoserine. Positions 87–107 (FLTVFLAIPLAFIAGILFATL) form an intramembrane region, helical. Residues 108–162 (SCLHIWILMPFVKTCLMVLPSVQTIWKSVTDVIIAPLCTSVGRCFSSVSLQLSQD) are Cytoplasmic-facing.

It belongs to the caveolin family. Monomer or homodimer. Interacts with CAV1; the interaction forms a stable heterooligomeric complex that is required for targeting to lipid rafts and for caveolae formation. Tyrosine phosphorylated forms do not form heterooligomers with the Tyr-19-phosphorylated form existing as a monomer or dimer, and the Tyr-27-form as a monomer only. Interacts (tyrosine phosphorylated form) with the SH2 domain-containing proteins, RASA1, NCK1 and SRC. Interacts (tyrosine phosphorylated form) with INSR, the interaction (Tyr-27-phosphorylated form) is increased on insulin stimulation. Interacts (Tyr-19 phosphorylated form) with MAPK1 (phosphorylated form); the interaction, promoted by insulin, leads to nuclear location and MAPK1 activation. Interacts with STAT3; the interaction is increased on insulin-induced tyrosine phosphorylation leading to STAT activation. In terms of processing, phosphorylated on serine and tyrosine residues. CAV1 promotes phosphorylation on Ser-23 which then targets the complex to the plasma membrane, lipid rafts and caveolae. Phosphorylation on Ser-36 appears to modulate mitosis in endothelial cells. Phosphorylation on both Tyr-19 and Tyr-27 is required for insulin-induced 'Ser-727' phosphorylation of STAT3 and its activation. Phosphorylation on Tyr-19 is required for insulin-induced phosphorylation of MAPK1 and DNA binding of STAT3. Tyrosine phosphorylation is induced by both EGF and insulin (By. similarity).

Its subcellular location is the nucleus. It localises to the cytoplasm. The protein localises to the golgi apparatus membrane. It is found in the cell membrane. The protein resides in the membrane. Its subcellular location is the caveola. Functionally, may act as a scaffolding protein within caveolar membranes. Interacts directly with G-protein alpha subunits and can functionally regulate their activity. Acts as an accessory protein in conjunction with CAV1 in targeting to lipid rafts and driving caveolae formation. The Ser-36 phosphorylated form has a role in modulating mitosis in endothelial cells. Positive regulator of cellular mitogenesis of the MAPK signaling pathway. Required for the insulin-stimulated nuclear translocation and activation of MAPK1 and STAT3, and the subsequent regulation of cell cycle progression. The sequence is that of Caveolin-2 (CAV2) from Gorilla gorilla gorilla (Western lowland gorilla).